Reading from the N-terminus, the 171-residue chain is Probable deoxyuridine 5'-triphosphate nucleotidohydrolase (171 aa).

Belongs to the dCTP deaminase family. Archaeal dUTPase subfamily.

The catalysed reaction is dUTP + H2O = dUMP + diphosphate + H(+). It functions in the pathway pyrimidine metabolism; dUMP biosynthesis; dUMP from dCTP (dUTP route): step 2/2. Its function is as follows. This enzyme is involved in nucleotide metabolism: it produces dUMP, the immediate precursor of thymidine nucleotides and it decreases the intracellular concentration of dUTP so that uracil cannot be incorporated into DNA. This Methanosarcina mazei (strain ATCC BAA-159 / DSM 3647 / Goe1 / Go1 / JCM 11833 / OCM 88) (Methanosarcina frisia) protein is Probable deoxyuridine 5'-triphosphate nucleotidohydrolase.